A 124-amino-acid chain; its full sequence is Small ribosomal subunit protein uS12 (124 aa).

A 3-methylthioaspartic acid modification is found at D89.

This sequence belongs to the universal ribosomal protein uS12 family. As to quaternary structure, part of the 30S ribosomal subunit. Contacts proteins S8 and S17. May interact with IF1 in the 30S initiation complex.

Functionally, with S4 and S5 plays an important role in translational accuracy. Interacts with and stabilizes bases of the 16S rRNA that are involved in tRNA selection in the A site and with the mRNA backbone. Located at the interface of the 30S and 50S subunits, it traverses the body of the 30S subunit contacting proteins on the other side and probably holding the rRNA structure together. The combined cluster of proteins S8, S12 and S17 appears to hold together the shoulder and platform of the 30S subunit. In Vibrio vulnificus (strain CMCP6), this protein is Small ribosomal subunit protein uS12.